Consider the following 397-residue polypeptide: MHKIMAINAGSSSLKFQIFTMPGEEVLVKGLIERIGLPDAIFNMSFQNEKIKETRAINDHGKAVEILLEQLKAHQVINDLSEITGVGHRVAHGGEDFVTSCVVTDEVVKGIEAVTNLAPLHNPANIIGIKTFRELLPNAVSVAVFDTAFHQTIPQENFLYALPYELYEKHHIRKYGFHGTSHKYVAGKAAEVLEKPLEKLKIISCHLGNGASVCAIEAGKSVNTSMGFTPNAGLMMGTRSGTIDATIIPYLVDELGYSLDEVMHMMSNESGVLGVSGISSDFRDIEIAAKEGNSRALLTLRMFTGQICNYIGAYASAMNGCDALLFTAGVGENSPLIRQMVTEQLSYLGVTCHVTKNNAGDMIISNDNEAVKVCIIPTNEELMIARDVEKYAKQTIG.

Residue N8 participates in Mg(2+) binding. K15 is a binding site for ATP. R89 is a substrate binding site. D146 serves as the catalytic Proton donor/acceptor. Residues 206-210 (HLGNG), 281-283 (DFR), and 329-333 (GVGEN) contribute to the ATP site. E380 is a binding site for Mg(2+).

This sequence belongs to the acetokinase family. In terms of assembly, homodimer. Mg(2+) is required as a cofactor. It depends on Mn(2+) as a cofactor.

The protein resides in the cytoplasm. It catalyses the reaction acetate + ATP = acetyl phosphate + ADP. It participates in metabolic intermediate biosynthesis; acetyl-CoA biosynthesis; acetyl-CoA from acetate: step 1/2. Catalyzes the formation of acetyl phosphate from acetate and ATP. Can also catalyze the reverse reaction. The chain is Acetate kinase 2 from Listeria monocytogenes serovar 1/2a (strain ATCC BAA-679 / EGD-e).